The following is a 268-amino-acid chain: Microtubule-associated protein RP/EB family member 1 (268 aa).

An N-acetylalanine modification is found at Ala2. The Calponin-homology (CH) domain occupies 14–116 (NLSRHDMLAW…FVQWFKKFFD (103 aa)). Lys66 is subject to N6-crotonyllysine. The residue at position 124 (Tyr124) is a Phosphotyrosine. The tract at residues 124–268 (YDPVAARQGQ…GGPQEEQEEY (145 aa)) is interaction with MTUS2/TIP150. The segment at 146–180 (LSKPKKPLGSSTAAPQRPIATQRTTAAPKAGPGMV) is disordered. The span at 154–170 (GSSTAAPQRPIATQRTT) shows a compositional bias: polar residues. Ser155 carries the post-translational modification Phosphoserine. In terms of domain architecture, EB1 C-terminal spans 185–255 (GVGNGDDEAA…LYATDEGFVI (71 aa)). The interaction with APC stretch occupies residues 206 to 211 (TVEDLE). The DCTN1-binding stretch occupies residues 208-268 (EDLEKERDFY…GGPQEEQEEY (61 aa)). The residue at position 220 (Lys220) is an N6-acetyllysine. An APC-binding region spans residues 220 to 242 (KLRNIELICQENEGENDPVLQRI). An interaction with SKA1 region spans residues 232-255 (EGENDPVLQRIVDILYATDEGFVI).

The protein belongs to the MAPRE family. Homodimer. Heterodimer with MAPRE3. Interacts (via C-terminal residues 206-211) with APC (via C-terminal residues 2674-2845); the interaction inhibits association with and bundling of F-actin. Interacts with DCTN1, DIAPH1 and DIAPH2. Interacts with DCTN2, TERF1 and dynein intermediate chain. Interacts with CLASP2, DST, KIF2C and STIM1; probably required for their targeting to the growing microtubule plus ends. Interacts with MTUS2; interaction is direct and probably targets MTUS2 to microtubules. Interacts (via C-terminus) with SKA1 (via SXIP motif); the interaction is direct and stabilizes the kinetochore-microtubule attachment of the SKA1 complex. Interacts with APC2. Interacts with CLASP1. Interacts (via C-terminus) with CLIP1. Interacts with SLAIN2 and SLAIN1. Interacts with MACF1. Interacts with KIF18B; this interaction is required for efficient accumulation of KIF18B at microtubule plus ends. Interacts with MISP. Interacts with RABL2/RABL2A; binds preferentially to GTP-bound RABL2. Interacts with KCNAB2. Interacts with KNSTRN. Interacts with NCKAP5L. Interacts with AKAP9. Interacts with PDE4DIP isoform 2/MMG8/SMYLE; this interaction is required for its recruitment to the Golgi apparatus. May form a pericentrosomal complex with AKAP9, CDK5RAP2 and PDE4DIP isoform 2/MMG8/SMYLE; within this complex, MAPRE1 binding to CDK5RAP2 may be mediated by PDE4DIP. Contrary to other mammalian species, does not interact with CDK5RAP2, possibly due to the lack of conservation of the MAPRE1-binding motif in mouse CDK5RAP2. Interacts with AKNA. Interacts with GAS2L1, GAS2L2, and GAS2L3. Interacts with RARRES1 and AGBL2. Acetylation at Lys-220 by KAT2B/PCAF promotes dynamic kinetochore-microtubule interactions in early mitosis. Post-translationally, crotonylated by KAT5 during mitosis, promoting astral microtubule plasticity and dynamic connection between astral microtubules and the cortex during mitotic chromosome segregation, thereby ensuring accurate spindle positioning in mitosis. Decrotonylated by HDAC3. Expressed within the midpiece of sperm tail (at protein level).

It is found in the cytoplasm. The protein localises to the cytoskeleton. The protein resides in the microtubule organizing center. Its subcellular location is the centrosome. It localises to the spindle. It is found in the spindle pole. In terms of biological role, plus-end tracking protein (+TIP) that binds to the plus-end of microtubules and regulates the dynamics of the microtubule cytoskeleton. Recruits other +TIP proteins to microtubules by binding to a conserved Ser-X-Leu-Pro (SXLP) motif in their polypeptide chains. Promotes cytoplasmic microtubule nucleation and elongation. Involved in mitotic spindle positioning by stabilizing microtubules and promoting dynamic connection between astral microtubules and the cortex during mitotic chromosome segregation. Assists chromosome alignment in metaphase by recruiting the SKA complex to the spindle and stabilizing its interactions with microtubule bundles (K-fibers). Also acts as a regulator of minus-end microtubule organization: interacts with the complex formed by AKAP9 and PDE4DIP, leading to recruit CAMSAP2 to the Golgi apparatus, thereby tethering non-centrosomal minus-end microtubules to the Golgi, an important step for polarized cell movement. Promotes elongation of CAMSAP2-decorated microtubule stretches on the minus-end of microtubules. Acts as a regulator of autophagosome transport via interaction with CAMSAP2. Functions downstream of Rho GTPases and DIAPH1 in stable microtubule formation. May play a role in cell migration. This is Microtubule-associated protein RP/EB family member 1 (Mapre1) from Mus musculus (Mouse).